A 436-amino-acid polypeptide reads, in one-letter code: DNA primase DnaG (436 aa).

In terms of domain architecture, Toprim spans 169–243 (DSIIVVEGRA…DIDYVARAPY (75 aa)). Residues Glu-175, Asp-217, and Asp-219 each coordinate Mg(2+).

It belongs to the archaeal DnaG primase family. As to quaternary structure, forms a ternary complex with MCM helicase and DNA. Requires Mg(2+) as cofactor.

The catalysed reaction is ssDNA + n NTP = ssDNA/pppN(pN)n-1 hybrid + (n-1) diphosphate.. Its function is as follows. RNA polymerase that catalyzes the synthesis of short RNA molecules used as primers for DNA polymerase during DNA replication. This Methanococcus maripaludis (strain DSM 14266 / JCM 13030 / NBRC 101832 / S2 / LL) protein is DNA primase DnaG.